Here is a 184-residue protein sequence, read N- to C-terminus: Large ribosomal subunit protein uL5c (184 aa).

This sequence belongs to the universal ribosomal protein uL5 family. In terms of assembly, part of the 50S ribosomal subunit; contacts the 5S rRNA.

The protein resides in the plastid. It is found in the chloroplast. Its function is as follows. Binds 5S rRNA, forms part of the central protuberance of the 50S subunit. In Zygnema circumcarinatum (Green alga), this protein is Large ribosomal subunit protein uL5c (rpl5).